Here is a 458-residue protein sequence, read N- to C-terminus: Phosphoglucosamine mutase (458 aa).

Residue Ser106 is the Phosphoserine intermediate of the active site. Residues Ser106, Asp247, Asp249, and Asp251 each coordinate Mg(2+). Ser106 carries the post-translational modification Phosphoserine.

It belongs to the phosphohexose mutase family. Requires Mg(2+) as cofactor. In terms of processing, activated by phosphorylation.

It carries out the reaction alpha-D-glucosamine 1-phosphate = D-glucosamine 6-phosphate. Functionally, catalyzes the conversion of glucosamine-6-phosphate to glucosamine-1-phosphate. This chain is Phosphoglucosamine mutase, found in Chlamydia caviae (strain ATCC VR-813 / DSM 19441 / 03DC25 / GPIC) (Chlamydophila caviae).